The chain runs to 475 residues: Sulfate adenylyltransferase subunit 1 (475 aa).

The tr-type G domain maps to 25 to 239; that stretch reads KSLLRFLTCG…EVLETVEIQR (215 aa). Positions 34 to 41 are G1; it reads GSVDDGKS. A GTP-binding site is contributed by 34-41; sequence GSVDDGKS. The tract at residues 92–96 is G2; the sequence is GITID. Residues 113-116 are G3; it reads DTPG. GTP-binding positions include 113–117 and 168–171; these read DTPGH and NKMD. The segment at 168–171 is G4; it reads NKMD. Residues 206-208 form a G5 region; sequence SAL.

This sequence belongs to the TRAFAC class translation factor GTPase superfamily. Classic translation factor GTPase family. CysN/NodQ subfamily. In terms of assembly, heterodimer composed of CysD, the smaller subunit, and CysN.

The enzyme catalyses sulfate + ATP + H(+) = adenosine 5'-phosphosulfate + diphosphate. Its pathway is sulfur metabolism; hydrogen sulfide biosynthesis; sulfite from sulfate: step 1/3. In terms of biological role, with CysD forms the ATP sulfurylase (ATPS) that catalyzes the adenylation of sulfate producing adenosine 5'-phosphosulfate (APS) and diphosphate, the first enzymatic step in sulfur assimilation pathway. APS synthesis involves the formation of a high-energy phosphoric-sulfuric acid anhydride bond driven by GTP hydrolysis by CysN coupled to ATP hydrolysis by CysD. The protein is Sulfate adenylyltransferase subunit 1 of Shigella sonnei (strain Ss046).